We begin with the raw amino-acid sequence, 842 residues long: Glucans biosynthesis glucosyltransferase H (842 aa).

Helical transmembrane passes span 140-160, 194-214, 513-533, 570-590, 615-635, 656-676, and 680-700; these read ILLL…KTIL, ILIL…TALM, VFLT…FLAL, LFAS…MLIW, VLLA…AFLG, FMRH…MAWL, and FLFW…VSVV.

This sequence belongs to the glycosyltransferase 2 family. OpgH subfamily.

It is found in the cell inner membrane. It functions in the pathway glycan metabolism; osmoregulated periplasmic glucan (OPG) biosynthesis. Functionally, involved in the biosynthesis of osmoregulated periplasmic glucans (OPGs). In Citrobacter koseri (strain ATCC BAA-895 / CDC 4225-83 / SGSC4696), this protein is Glucans biosynthesis glucosyltransferase H.